A 130-amino-acid polypeptide reads, in one-letter code: Small ribosomal subunit protein uS8 (130 aa).

This sequence belongs to the universal ribosomal protein uS8 family. As to quaternary structure, part of the 30S ribosomal subunit.

In terms of biological role, one of the primary rRNA binding proteins, it binds directly to 16S rRNA central domain where it helps coordinate assembly of the platform of the 30S subunit. The chain is Small ribosomal subunit protein uS8 from Pyrococcus furiosus (strain ATCC 43587 / DSM 3638 / JCM 8422 / Vc1).